A 952-amino-acid polypeptide reads, in one-letter code: MDNGGSVLSLSAPHFPYSATILRRHSPVASISFSLKQPPPQPPEPPESPPDLRRPEKSIGSSSSSSSPSPIPSPKTPLKINPLKGLTNRSSVSPLVQSEVSSKVSSFGSSLASKLRLSSKLSPPPPPPPPPPVEETTQFRDEFRSDTKPPEEETRNPQQEFRQEGKIFVGNLPTWIKKPEFEEFFRQFGPIENVILIKGHHEVEKNAGFGFIIYAAEKSAMKAVEFDGVEFHGRILTVKLDDGKRLKTKAEQRVRWVEEGEEDTKMSNKSSWHQEREGSRKSLQRILDTNGDNWQAVISAFEKISKPSRTEFGLMVKFYGRRGDMHRARETFERMRARGITPTSRIYTSLIHAYAVGRDMDEALSCVRKMKEEGIEMSLVTYSVIVGGFSKAGHAEAADYWFDEAKRIHKTLNASIYGKIIYAHCQTCNMERAEALVREMEEEGIDAPIAIYHTMMDGYTMVADEKKGLVVFKRLKECGFTPTVVTYGCLINLYTKVGKISKALEVSRVMKEEGVKHNLKTYSMMINGFVKLKDWANAFAVFEDMVKEGMKPDVILYNNIISAFCGMGNMDRAIQTVKEMQKLRHRPTTRTFMPIIHGYAKSGDMRRSLEVFDMMRRCGCVPTVHTFNGLINGLVEKRQMEKAVEILDEMTLAGVSANEHTYTKIMQGYASVGDTGKAFEYFTRLQNEGLDVDIFTYEALLKACCKSGRMQSALAVTKEMSARNIPRNSFVYNILIDGWARRGDVWEAADLIQQMKKEGVKPDIHTYTSFISACSKAGDMNRATQTIEEMEALGVKPNIKTYTTLIKGWARASLPEKALSCYEEMKAMGIKPDKAVYHCLLTSLLSRASIAEAYIYSGVMTICKEMVEAGLIVDMGTAVHWSKCLCKIEASGGELTETLQKTFPPDWSSHHHHHGFLDQVSDVDSDEDDVDGEDGEDDEDVNSVSDLLSPYK.

The N-terminal 60 residues, 1 to 60 (MDNGGSVLSLSAPHFPYSATILRRHSPVASISFSLKQPPPQPPEPPESPPDLRRPEKSIG), are a transit peptide targeting the chloroplast. 2 disordered regions span residues 30–95 (SISF…VSPL) and 115–163 (LRLS…EFRQ). Residues 37–49 (QPPPQPPEPPESP) are compositionally biased toward pro residues. Low complexity predominate over residues 58 to 68 (SIGSSSSSSSP). A compositionally biased stretch (pro residues) spans 122–133 (SPPPPPPPPPPV). A compositionally biased stretch (basic and acidic residues) spans 137-163 (TQFRDEFRSDTKPPEEETRNPQQEFRQ). One can recognise an RRM domain in the interval 167–238 (IFVGNLPTWI…VEFHGRILTV (72 aa)). Over residues 259–280 (EGEEDTKMSNKSSWHQEREGSR) the composition is skewed to basic and acidic residues. The tract at residues 259–281 (EGEEDTKMSNKSSWHQEREGSRK) is disordered. PPR repeat units follow at residues 308 to 342 (SRTEFGLMVKFYGRRGDMHRARETFERMRARGITP), 343 to 377 (TSRIYTSLIHAYAVGRDMDEALSCVRKMKEEGIEM), 378 to 412 (SLVTYSVIVGGFSKAGHAEAADYWFDEAKRIHKTL), 413 to 447 (NASIYGKIIYAHCQTCNMERAEALVREMEEEGIDA), 448 to 482 (PIAIYHTMMDGYTMVADEKKGLVVFKRLKECGFTP), 483 to 517 (TVVTYGCLINLYTKVGKISKALEVSRVMKEEGVKH), 518 to 552 (NLKTYSMMINGFVKLKDWANAFAVFEDMVKEGMKP), 553 to 587 (DVILYNNIISAFCGMGNMDRAIQTVKEMQKLRHRP), 588 to 622 (TTRTFMPIIHGYAKSGDMRRSLEVFDMMRRCGCVP), 623 to 657 (TVHTFNGLINGLVEKRQMEKAVEILDEMTLAGVSA), 658 to 692 (NEHTYTKIMQGYASVGDTGKAFEYFTRLQNEGLDV), 693 to 727 (DIFTYEALLKACCKSGRMQSALAVTKEMSARNIPR), 728 to 762 (NSFVYNILIDGWARRGDVWEAADLIQQMKKEGVKP), 763 to 797 (DIHTYTSFISACSKAGDMNRATQTIEEMEALGVKP), and 798 to 832 (NIKTYTTLIKGWARASLPEKALSCYEEMKAMGIKP). Positions 918-952 (DQVSDVDSDEDDVDGEDGEDDEDVNSVSDLLSPYK) are disordered. Residues 921-941 (SDVDSDEDDVDGEDGEDDEDV) show a composition bias toward acidic residues.

This sequence belongs to the PPR family. P subfamily.

It is found in the plastid. It localises to the chloroplast. Functionally, may play a role in the plastid ribosome biogenesis. The chain is Pentatricopeptide repeat-containing protein At5g04810, chloroplastic (PPR4) from Arabidopsis thaliana (Mouse-ear cress).